The primary structure comprises 317 residues: Transaldolase (317 aa).

Lysine 132 (schiff-base intermediate with substrate) is an active-site residue.

Belongs to the transaldolase family. Type 1 subfamily. In terms of assembly, homodimer.

Its subcellular location is the cytoplasm. It carries out the reaction D-sedoheptulose 7-phosphate + D-glyceraldehyde 3-phosphate = D-erythrose 4-phosphate + beta-D-fructose 6-phosphate. The protein operates within carbohydrate degradation; pentose phosphate pathway; D-glyceraldehyde 3-phosphate and beta-D-fructose 6-phosphate from D-ribose 5-phosphate and D-xylulose 5-phosphate (non-oxidative stage): step 2/3. In terms of biological role, transaldolase is important for the balance of metabolites in the pentose-phosphate pathway. In Edwardsiella ictaluri (strain 93-146), this protein is Transaldolase.